The following is a 522-amino-acid chain: Nitrogen fixation protein VnfA (522 aa).

Residues 22-183 are a domain; it reads LLYEMSQIAT…AQAVELYLVE (162 aa). The 143-residue stretch at 35 to 177 folds into the GAF domain; the sequence is DLSSIISILL…ILATTTAQAV (143 aa). The 230-residue stretch at 210 to 439 folds into the Sigma-54 factor interaction domain; it reads IIGNSKPMLE…LENVIERAML (230 aa). ATP is bound by residues 238-245 and 301-310; these read GESGVGKE and AAGGTIFLDE. A DNA-binding region (H-T-H motif) is located at residues 493–512; that stretch reads MTEAATHLGLTARVLGLRMG.

Its function is as follows. Required for the expression of the V-dependent nitrogen fixation system in Azotobacter vinelandii. It is required for the regulation of nitrogenase 2 transcription. Interacts with sigma-54. The protein is Nitrogen fixation protein VnfA (vnfA) of Azotobacter vinelandii.